The following is a 233-amino-acid chain: Serine-rich 25 kDa antigen protein (233 aa).

A disordered region spans residues 35–219 (KNEASPEKLE…DNNNLDAASS (185 aa)). The segment covering 38–53 (ASPEKLEEAEEKEKSS) has biased composition (basic and acidic residues). Acidic residues predominate over residues 61-71 (SNEDNEDDEDE). 10 consecutive repeat copies span residues 82–93 (SSSDKPDNKPEA), 102–113 (SSSDKPDNKPEA), 114–125 (SSSDKPDNKPEA), 126–137 (SSSDKPDNKPEA), 138–149 (SSSDKPDNKPEA), 150–161 (SSSDKPDNKPEA), 162–169 (SSTNKPEA), 170–177 (SSTNKPEA), 178–185 (SSTNKPEA), and 186–193 (SSTNKPEA). Positions 82 to 161 (SSSDKPDNKP…SDKPDNKPEA (80 aa)) are 6 X 12 AA tandem repeats of S-S-S-D-K-P-D-N-K-P-E-A. A compositionally biased stretch (basic and acidic residues) spans 83–159 (SSDKPDNKPE…SSSDKPDNKP (77 aa)). Residues 160–192 (EASSTNKPEASSTNKPEASSTNKPEASSTNKPE) show a composition bias toward polar residues. The 4 X 8 AA tandem repeats of S-S-T-N-K-P-E-A stretch occupies residues 162–193 (SSTNKPEASSTNKPEASSTNKPEASSTNKPEA). Over residues 193 to 219 (ASSTSNSNDKSGSSSDNDNNNLDAASS) the composition is skewed to low complexity.

Post-translationally, phosphorylated on serine residue(s). In terms of processing, O-glycosylated; glycans consist of single N-acetylglucosamine residues. O-acylated; acyl group is probably palmitate, not myristate.

The protein localises to the cell membrane. In terms of biological role, plays a role in the adhesion to host cells. Involved in the adhesion to host apoptotic cells thereby facilitating their phagocytosis. The protein is Serine-rich 25 kDa antigen protein of Entamoeba histolytica (strain ATCC 30459 / HM-1:IMSS / ABRM).